The primary structure comprises 247 residues: Adenylyl-sulfate kinase (247 aa).

Residues 1-24 (MSQSNSDDSASSSTQQAGDGQDDV) are disordered. Residue 55 to 62 (GLSGCGKS) coordinates ATP. The Phosphoserine intermediate role is filled by S146.

Belongs to the APS kinase family.

The enzyme catalyses adenosine 5'-phosphosulfate + ATP = 3'-phosphoadenylyl sulfate + ADP + H(+). It participates in sulfur metabolism; hydrogen sulfide biosynthesis; sulfite from sulfate: step 2/3. Its function is as follows. Catalyzes the synthesis of activated sulfate. The polypeptide is Adenylyl-sulfate kinase (Rhodopirellula baltica (strain DSM 10527 / NCIMB 13988 / SH1)).